The following is a 264-amino-acid chain: Thymidylate synthase (264 aa).

Arg-21 is a dUMP binding site. Position 51 (His-51) interacts with (6R)-5,10-methylene-5,6,7,8-tetrahydrofolate. 126–127 (RR) serves as a coordination point for dUMP. Cys-146 serves as the catalytic Nucleophile. DUMP contacts are provided by residues 166–169 (RSAD), Asn-177, and 207–209 (HLY). Asp-169 provides a ligand contact to (6R)-5,10-methylene-5,6,7,8-tetrahydrofolate. Ser-263 is a (6R)-5,10-methylene-5,6,7,8-tetrahydrofolate binding site.

This sequence belongs to the thymidylate synthase family. Bacterial-type ThyA subfamily. As to quaternary structure, homodimer.

The protein localises to the cytoplasm. It carries out the reaction dUMP + (6R)-5,10-methylene-5,6,7,8-tetrahydrofolate = 7,8-dihydrofolate + dTMP. The protein operates within pyrimidine metabolism; dTTP biosynthesis. Catalyzes the reductive methylation of 2'-deoxyuridine-5'-monophosphate (dUMP) to 2'-deoxythymidine-5'-monophosphate (dTMP) while utilizing 5,10-methylenetetrahydrofolate (mTHF) as the methyl donor and reductant in the reaction, yielding dihydrofolate (DHF) as a by-product. This enzymatic reaction provides an intracellular de novo source of dTMP, an essential precursor for DNA biosynthesis. The sequence is that of Thymidylate synthase from Neisseria meningitidis serogroup C / serotype 2a (strain ATCC 700532 / DSM 15464 / FAM18).